We begin with the raw amino-acid sequence, 84 residues long: ATP synthase subunit c (84 aa).

The next 2 membrane-spanning stretches (helical) occupy residues 9 to 29 and 54 to 74; these read IIGASILLAFAALGTAIGFAI and IVAGLLDAIAMIAVGISLLFI.

It belongs to the ATPase C chain family. F-type ATPases have 2 components, F(1) - the catalytic core - and F(0) - the membrane proton channel. F(1) has five subunits: alpha(3), beta(3), gamma(1), delta(1), epsilon(1). F(0) has three main subunits: a(1), b(2) and c(10-14). The alpha and beta chains form an alternating ring which encloses part of the gamma chain. F(1) is attached to F(0) by a central stalk formed by the gamma and epsilon chains, while a peripheral stalk is formed by the delta and b chains.

The protein resides in the cell inner membrane. Functionally, f(1)F(0) ATP synthase produces ATP from ADP in the presence of a proton or sodium gradient. F-type ATPases consist of two structural domains, F(1) containing the extramembraneous catalytic core and F(0) containing the membrane proton channel, linked together by a central stalk and a peripheral stalk. During catalysis, ATP synthesis in the catalytic domain of F(1) is coupled via a rotary mechanism of the central stalk subunits to proton translocation. Key component of the F(0) channel; it plays a direct role in translocation across the membrane. A homomeric c-ring of between 10-14 subunits forms the central stalk rotor element with the F(1) delta and epsilon subunits. This chain is ATP synthase subunit c, found in Actinobacillus pleuropneumoniae serotype 7 (strain AP76).